Here is a 360-residue protein sequence, read N- to C-terminus: Phospho-N-acetylmuramoyl-pentapeptide-transferase (360 aa).

The next 10 helical transmembrane spans lie at 21-41 (YLTF…LWIG), 71-91 (TPTM…ILWA), 94-114 (SNPY…IGFI), 142-162 (LVVA…VLVV), 168-188 (IMPQ…VGAS), 199-219 (GLAI…AWAT), 236-256 (ASEL…FLWF), 263-283 (VFMG…IAVL), 288-308 (FLLF…ILQV), and 338-358 (VIVR…VTLK).

Belongs to the glycosyltransferase 4 family. MraY subfamily. Mg(2+) is required as a cofactor.

The protein resides in the cell inner membrane. It catalyses the reaction UDP-N-acetyl-alpha-D-muramoyl-L-alanyl-gamma-D-glutamyl-meso-2,6-diaminopimeloyl-D-alanyl-D-alanine + di-trans,octa-cis-undecaprenyl phosphate = di-trans,octa-cis-undecaprenyl diphospho-N-acetyl-alpha-D-muramoyl-L-alanyl-D-glutamyl-meso-2,6-diaminopimeloyl-D-alanyl-D-alanine + UMP. It participates in cell wall biogenesis; peptidoglycan biosynthesis. Its function is as follows. Catalyzes the initial step of the lipid cycle reactions in the biosynthesis of the cell wall peptidoglycan: transfers peptidoglycan precursor phospho-MurNAc-pentapeptide from UDP-MurNAc-pentapeptide onto the lipid carrier undecaprenyl phosphate, yielding undecaprenyl-pyrophosphoryl-MurNAc-pentapeptide, known as lipid I. This Tolumonas auensis (strain DSM 9187 / NBRC 110442 / TA 4) protein is Phospho-N-acetylmuramoyl-pentapeptide-transferase.